We begin with the raw amino-acid sequence, 456 residues long: Cell adhesion molecule 1 (456 aa).

The N-terminal stretch at 1 to 47 (MASAVLPSGSQCAAAAAVAAAAAPPGLRLRLLLLLLSAAALIPTGDG) is a signal peptide. One can recognise an Ig-like V-type domain in the interval 48 to 142 (QNLFTKDVTV…PPQESYTTIT (95 aa)). The Extracellular portion of the chain corresponds to 48–388 (QNLFTKDVTV…EEGTIGAVDH (341 aa)). Cysteine 67 and cysteine 127 are disulfide-bonded. Asparagine 70, asparagine 104, asparagine 116, and asparagine 168 each carry an N-linked (GlcNAc...) asparagine glycan. Ig-like C2-type domains follow at residues 147–241 (PRNL…RYLE) and 246–332 (PQVH…YMLY). Disulfide bonds link cysteine 169–cysteine 223 and cysteine 270–cysteine 316. N-linked (GlcNAc...) asparagine glycans are attached at residues asparagine 307 and asparagine 311. Residues 389 to 409 (AVIGGVVAVVVFAMLCLLIIL) traverse the membrane as a helical segment. Over 410–456 (GRYFARHKGTYFTHEAKGADDAADADTAIINAEGGQNNSEEKKEYFI) the chain is Cytoplasmic. Threonine 436 carries the phosphothreonine modification. Residue serine 448 is modified to Phosphoserine.

The protein belongs to the nectin family. As to quaternary structure, homodimer (via Ig-like V-type domain). Interacts with FARP1. Interacts (via Ig-like V-type domain) with CRTAM (via Ig-like V-type domain); the interaction competes with CRTAM homodimerization and CADM1 homodimerization. Interacts (via C-terminus) with EPB41L3/DAL1. The interaction with EPB41L3/DAL1 may act to anchor CADM1 to the actin cytoskeleton. Interacts (via C-terminus) with MPP2 (via PDZ domain). Interacts (via C-terminus) with MPP3 (via PDZ domain); this interaction connects CADM1 with DLG1. Interacts (via C-terminus) with PALS2 (via PDZ domain). In terms of processing, N-glycosylated. Glycosylation at Asn-70 and Asn-104 promotes adhesive binding and synapse induction. As to expression, expressed dominantly in epithelial cells but not expressed in fibroblast cells (at protein level). Expressed in the T-cell area of lymph nodes, specifically in CD8+ and CD4- CD8- dendritic cells (at protein level). Expressed in CD8+ dendritic cells in the spleen (at protein level). Expressed in CD103+ dendritic cells in the small intestine lamina propria and mesenteric lymph nodes (at protein level). Expressed in brain, lung, kidney, testis, heart, spleen and liver, but not expressed in skeletal muscle.

It is found in the cell membrane. The protein localises to the synaptic cell membrane. Mediates homophilic cell-cell adhesion in a Ca(2+)-independent manner. Also mediates heterophilic cell-cell adhesion with CADM3 and NECTIN3 in a Ca(2+)-independent manner. Interaction with CRTAM promotes natural killer (NK) cell cytotoxicity and interferon-gamma (IFN-gamma) secretion by CD8+ T-cells in vitro as well as NK cell-mediated rejection of tumors expressing CADM1 in vivo. In mast cells, may mediate attachment to and promote communication with nerves. CADM1, together with MITF, is essential for development and survival of mast cells in vivo. By interacting with CRTAM and thus promoting the adhesion between CD8+ T-cells and CD8+ dendritic cells, regulates the retention of activated CD8+ T-cell within the draining lymph node. Required for the intestinal retention of intraepithelial CD4+ CD8+ T-cells and, to a lesser extent, intraepithelial and lamina propria CD8+ T-cells and CD4+ T-cells. Interaction with CRTAM promotes the adhesion to gut-associated CD103+ dendritic cells, which may facilitate the expression of gut-homing and adhesion molecules on T-cells and the conversion of CD4+ T-cells into CD4+ CD8+ T-cells. Acts as a synaptic cell adhesion molecule and plays a role in the formation of dendritic spines and in synapse assembly. May be involved in neuronal migration, axon growth, pathfinding, and fasciculation on the axons of differentiating neurons. May play diverse roles in the spermatogenesis including in the adhesion of spermatocytes and spermatids to Sertoli cells and for their normal differentiation into mature spermatozoa. The polypeptide is Cell adhesion molecule 1 (Mus musculus (Mouse)).